The sequence spans 353 residues: Mitochondrial ubiquitin ligase activator of nfkb 1 (353 aa).

Topologically, residues 1–8 are cytoplasmic; that stretch reads MENGGRPS. Residues 9–29 traverse the membrane as a helical segment; the sequence is VGQVILLTTSSAITALFYSIY. At 30-239 the chain is on the mitochondrial intermembrane side; it reads RHKYRSVQTL…LLEKQEVQMR (210 aa). A helical membrane pass occupies residues 240–260; the sequence is WWRILSIVFGVASCITLFFIL. The Cytoplasmic segment spans residues 261-353; sequence RRKYRHYKEK…IDRIVPLYNS (93 aa). The RING-type zinc-finger motif lies at 303-341; sequence CSICLSTEKSCVFLECGHVCSCISCYQALPSPKKCPICR.

In terms of assembly, homooligomer.

It is found in the mitochondrion outer membrane. It catalyses the reaction S-ubiquitinyl-[E2 ubiquitin-conjugating enzyme]-L-cysteine + [acceptor protein]-L-lysine = [E2 ubiquitin-conjugating enzyme]-L-cysteine + N(6)-ubiquitinyl-[acceptor protein]-L-lysine.. It participates in protein modification; protein ubiquitination. E3 ubiquitin-protein ligase that plays a role in the control of mitochondrial morphology. Promotes mitochondrial fragmentation and influences mitochondrial localization. Inhibits cell growth. E3 ubiquitin ligases accept ubiquitin from an E2 ubiquitin-conjugating enzyme in the form of a thioester and then directly transfer the ubiquitin to targeted substrates. This chain is Mitochondrial ubiquitin ligase activator of nfkb 1 (mul1), found in Xenopus laevis (African clawed frog).